The sequence spans 218 residues: Octanoyltransferase (218 aa).

One can recognise a BPL/LPL catalytic domain in the interval Ala27–Thr210. Substrate-binding positions include Arg72–His79, Ser139–Gly141, and Gly152–Ala154. Cys170 acts as the Acyl-thioester intermediate in catalysis.

Belongs to the LipB family.

It is found in the cytoplasm. The catalysed reaction is octanoyl-[ACP] + L-lysyl-[protein] = N(6)-octanoyl-L-lysyl-[protein] + holo-[ACP] + H(+). It participates in protein modification; protein lipoylation via endogenous pathway; protein N(6)-(lipoyl)lysine from octanoyl-[acyl-carrier-protein]: step 1/2. In terms of biological role, catalyzes the transfer of endogenously produced octanoic acid from octanoyl-acyl-carrier-protein onto the lipoyl domains of lipoate-dependent enzymes. Lipoyl-ACP can also act as a substrate although octanoyl-ACP is likely to be the physiological substrate. The protein is Octanoyltransferase of Nitratidesulfovibrio vulgaris (strain DSM 19637 / Miyazaki F) (Desulfovibrio vulgaris).